A 273-amino-acid polypeptide reads, in one-letter code: Dermonecrotic toxin LhSicTox-alphaIA2avi (273 aa).

Histidine 5 is a catalytic residue. Mg(2+)-binding residues include glutamate 25 and aspartate 27. Histidine 41 (nucleophile) is an active-site residue. Intrachain disulfides connect cysteine 45–cysteine 51 and cysteine 47–cysteine 190. Residue aspartate 85 participates in Mg(2+) binding.

This sequence belongs to the arthropod phospholipase D family. Class II subfamily. Mg(2+) serves as cofactor. As to expression, expressed by the venom gland.

It localises to the secreted. It carries out the reaction an N-(acyl)-sphingosylphosphocholine = an N-(acyl)-sphingosyl-1,3-cyclic phosphate + choline. It catalyses the reaction an N-(acyl)-sphingosylphosphoethanolamine = an N-(acyl)-sphingosyl-1,3-cyclic phosphate + ethanolamine. The catalysed reaction is a 1-acyl-sn-glycero-3-phosphocholine = a 1-acyl-sn-glycero-2,3-cyclic phosphate + choline. The enzyme catalyses a 1-acyl-sn-glycero-3-phosphoethanolamine = a 1-acyl-sn-glycero-2,3-cyclic phosphate + ethanolamine. Functionally, dermonecrotic toxins cleave the phosphodiester linkage between the phosphate and headgroup of certain phospholipids (sphingolipid and lysolipid substrates), forming an alcohol (often choline) and a cyclic phosphate. This toxin acts on sphingomyelin (SM). It may also act on ceramide phosphoethanolamine (CPE), lysophosphatidylcholine (LPC) and lysophosphatidylethanolamine (LPE), but not on lysophosphatidylserine (LPS), and lysophosphatidylglycerol (LPG). It acts by transphosphatidylation, releasing exclusively cyclic phosphate products as second products. Induces dermonecrosis, hemolysis, increased vascular permeability, edema, inflammatory response, and platelet aggregation. In Loxosceles hirsuta (Recluse spider), this protein is Dermonecrotic toxin LhSicTox-alphaIA2avi.